The primary structure comprises 204 residues: Thymidine kinase (204 aa).

Residues 18–25 and 91–94 each bind ATP; these read GSMFSGKT and DEGQ. Glu-92 functions as the Proton acceptor in the catalytic mechanism. Zn(2+) contacts are provided by Cys-148, Cys-151, Cys-180, and His-183.

Belongs to the thymidine kinase family. In terms of assembly, homotetramer.

Its subcellular location is the cytoplasm. It catalyses the reaction thymidine + ATP = dTMP + ADP + H(+). This is Thymidine kinase from Bdellovibrio bacteriovorus (strain ATCC 15356 / DSM 50701 / NCIMB 9529 / HD100).